The primary structure comprises 588 residues: 2-isopropylmalate synthase (588 aa).

One can recognise a Pyruvate carboxyltransferase domain in the interval 40-314; it reads PRWCAVDLRD…DPQIDFSDLD (275 aa). The Mg(2+) site is built by D49, H253, H255, and N289. The segment at 456–588 is regulatory domain; the sequence is APLDRVEEKW…TVREPELAAV (133 aa).

The protein belongs to the alpha-IPM synthase/homocitrate synthase family. LeuA type 2 subfamily. As to quaternary structure, homodimer. Requires Mg(2+) as cofactor.

It is found in the cytoplasm. It catalyses the reaction 3-methyl-2-oxobutanoate + acetyl-CoA + H2O = (2S)-2-isopropylmalate + CoA + H(+). The protein operates within amino-acid biosynthesis; L-leucine biosynthesis; L-leucine from 3-methyl-2-oxobutanoate: step 1/4. Functionally, catalyzes the condensation of the acetyl group of acetyl-CoA with 3-methyl-2-oxobutanoate (2-ketoisovalerate) to form 3-carboxy-3-hydroxy-4-methylpentanoate (2-isopropylmalate). This chain is 2-isopropylmalate synthase, found in Clavibacter michiganensis subsp. michiganensis (strain NCPPB 382).